Consider the following 230-residue polypeptide: Transcriptional regulatory protein CitT (230 aa).

Positions 6–124 (KVLIIEDDFR…VLHQRLDAYV (119 aa)) constitute a Response regulatory domain. 4-aspartylphosphate is present on Asp59. Residues 184 to 203 (AMEGARLIGASRSTVRRYFE) constitute a DNA-binding region (H-T-H motif).

Post-translationally, phosphorylated by CitS.

Its subcellular location is the cytoplasm. In terms of biological role, member of the two-component regulatory system CitT/CitS. This chain is Transcriptional regulatory protein CitT (citT), found in Halalkalibacterium halodurans (strain ATCC BAA-125 / DSM 18197 / FERM 7344 / JCM 9153 / C-125) (Bacillus halodurans).